The following is a 345-amino-acid chain: GTPase Obg (345 aa).

In terms of domain architecture, Obg spans 1-158 (MFIDSVKITL…RLVRLELKLI (158 aa)). The 181-residue stretch at 159–339 (ADVGLVGFPN…LKFMLLEEIK (181 aa)) folds into the OBG-type G domain. GTP contacts are provided by residues 165-172 (GFPNVGKS), 190-194 (FTTLT), 212-215 (DIPG), 280-283 (SKSD), and 320-322 (SSL). Mg(2+)-binding residues include S172 and T192.

Belongs to the TRAFAC class OBG-HflX-like GTPase superfamily. OBG GTPase family. As to quaternary structure, monomer. Mg(2+) serves as cofactor.

It localises to the cytoplasm. An essential GTPase which binds GTP, GDP and possibly (p)ppGpp with moderate affinity, with high nucleotide exchange rates and a fairly low GTP hydrolysis rate. Plays a role in control of the cell cycle, stress response, ribosome biogenesis and in those bacteria that undergo differentiation, in morphogenesis control. The polypeptide is GTPase Obg (Campylobacter jejuni subsp. doylei (strain ATCC BAA-1458 / RM4099 / 269.97)).